Here is a 201-residue protein sequence, read N- to C-terminus: Recombination protein RecR (201 aa).

The C4-type zinc finger occupies 57-72; sequence CADCRTFTEQDVCNIC. Residues 81–176 form the Toprim domain; the sequence is GQICVVESPA…EASRIAHGVP (96 aa).

It belongs to the RecR family.

Its function is as follows. May play a role in DNA repair. It seems to be involved in an RecBC-independent recombinational process of DNA repair. It may act with RecF and RecO. The polypeptide is Recombination protein RecR (Salmonella choleraesuis (strain SC-B67)).